Consider the following 179-residue polypeptide: MKGGKIVQLTRPNRINSEIRAIKVRLTGVEGDQIGIVNLREALKKSEELGLDLVEISPNAEPPVCRIMDYGKFLYEKSKSSKEQKKKQKVIHIKEIKFRPGTDEGDYQVKLRNLIRFLEDGDKAKITLRFRGREMAHQKIGVDVLNRVKNDLIELATVEYFPSKIEGRQMIMILAPKKK.

Belongs to the IF-3 family. Monomer.

The protein resides in the cytoplasm. Functionally, IF-3 binds to the 30S ribosomal subunit and shifts the equilibrium between 70S ribosomes and their 50S and 30S subunits in favor of the free subunits, thus enhancing the availability of 30S subunits on which protein synthesis initiation begins. The polypeptide is Translation initiation factor IF-3 (Buchnera aphidicola subsp. Acyrthosiphon pisum (strain APS) (Acyrthosiphon pisum symbiotic bacterium)).